Reading from the N-terminus, the 823-residue chain is Aminopeptidase O (823 aa).

Histidine 481 lines the Zn(2+) pocket. Glutamate 482 serves as the catalytic Proton acceptor. Zn(2+) contacts are provided by histidine 485 and glutamate 504. The short motif at 693 to 703 (RRPRKRKRGKR) is the Nucleolar localization signal element.

Belongs to the peptidase M1 family. The cofactor is Zn(2+). As to expression, expressed in testis, heart, brain, lung, liver, skeletal muscle, kidney and ovary. Expressed in vascular tissues.

It is found in the nucleus. It localises to the nucleolus. Its subcellular location is the cytoplasm. Aminopeptidase which catalyzes the hydrolysis of amino acid residues from the N-terminus of peptide or protein substrates. This Mus musculus (Mouse) protein is Aminopeptidase O (Aopep).